Here is a 330-residue protein sequence, read N- to C-terminus: DNA primase small subunit PriS (330 aa).

Residues D101 and D103 contribute to the active site. Zn(2+)-binding residues include C116, C119, C128, and D131. Residue D235 is part of the active site.

The protein belongs to the eukaryotic-type primase small subunit family. As to quaternary structure, heterodimer of a small subunit (PriS) and a large subunit (PriL). Mg(2+) is required as a cofactor. It depends on Mn(2+) as a cofactor.

Its function is as follows. Catalytic subunit of DNA primase, an RNA polymerase that catalyzes the synthesis of short RNA molecules used as primers for DNA polymerase during DNA replication. The small subunit contains the primase catalytic core and has DNA synthesis activity on its own. Binding to the large subunit stabilizes and modulates the activity, increasing the rate of DNA synthesis while decreasing the length of the DNA fragments, and conferring RNA synthesis capability. The DNA polymerase activity may enable DNA primase to also catalyze primer extension after primer synthesis. May also play a role in DNA repair. This Saccharolobus islandicus (strain M.16.27) (Sulfolobus islandicus) protein is DNA primase small subunit PriS.